Consider the following 428-residue polypeptide: AA14 family lytic polysaccharide monooxygenase A (428 aa).

Residues Met-1–Ala-21 form the signal peptide. Asn-34 and Asn-52 each carry an N-linked (GlcNAc...) asparagine glycan. 5 disulfides stabilise this stretch: Cys-88-Cys-112, Cys-131-Cys-158, Cys-174-Cys-179, Cys-181-Cys-203, and Cys-223-Cys-239. An N-linked (GlcNAc...) asparagine glycan is attached at Asn-155. Disordered stretches follow at residues Lys-216–Cys-239 and Ser-292–His-428. Residues Cys-223 to Pro-232 are compositionally biased toward basic and acidic residues. The N-linked (GlcNAc...) asparagine glycan is linked to Asn-238. The segment covering Ser-292 to Pro-379 has biased composition (low complexity). A compositionally biased stretch (polar residues) spans Ile-380–Arg-402. Over residues Gln-414–His-428 the composition is skewed to basic residues.

Cu(2+) serves as cofactor.

It localises to the secreted. Functionally, lytic polysaccharide monooxygenase (LPMO) showing oxidase and peroxidase activities that are common for LPMOs. Catalysis by LPMOs requires the reduction of the active-site copper from Cu(II) to Cu(I) by a reducing agent and H(2)O(2) or O(2) as a cosubstrate. Shows no activity on cellulose-associated xylan or any other tested polysaccharide substrate, meaning that the substrate rremains unknown. This chain is AA14 family lytic polysaccharide monooxygenase A, found in Trametes coccinea (strain BRFM310) (Pycnoporus coccineus).